The chain runs to 512 residues: tRNA-2-methylthio-N(6)-dimethylallyladenosine synthase (512 aa).

A disordered region spans residues M1–P20. Residues R21–H137 form the MTTase N-terminal domain. The [4Fe-4S] cluster site is built by C30, C66, C100, C174, C178, and C181. In terms of domain architecture, Radical SAM core spans R160–E397. The TRAM domain maps to R399–P469. A compositionally biased stretch (basic and acidic residues) spans A470 to T486. The disordered stretch occupies residues A470–L512.

Belongs to the methylthiotransferase family. MiaB subfamily. In terms of assembly, monomer. It depends on [4Fe-4S] cluster as a cofactor.

The protein resides in the cytoplasm. The catalysed reaction is N(6)-dimethylallyladenosine(37) in tRNA + (sulfur carrier)-SH + AH2 + 2 S-adenosyl-L-methionine = 2-methylsulfanyl-N(6)-dimethylallyladenosine(37) in tRNA + (sulfur carrier)-H + 5'-deoxyadenosine + L-methionine + A + S-adenosyl-L-homocysteine + 2 H(+). Functionally, catalyzes the methylthiolation of N6-(dimethylallyl)adenosine (i(6)A), leading to the formation of 2-methylthio-N6-(dimethylallyl)adenosine (ms(2)i(6)A) at position 37 in tRNAs that read codons beginning with uridine. The polypeptide is tRNA-2-methylthio-N(6)-dimethylallyladenosine synthase (Mycolicibacterium gilvum (strain PYR-GCK) (Mycobacterium gilvum (strain PYR-GCK))).